The primary structure comprises 340 residues: Tetraacyldisaccharide 4'-kinase (340 aa).

51-58 (HMGGAGKT) is an ATP binding site.

The protein belongs to the LpxK family.

The catalysed reaction is a lipid A disaccharide + ATP = a lipid IVA + ADP + H(+). It participates in glycolipid biosynthesis; lipid IV(A) biosynthesis; lipid IV(A) from (3R)-3-hydroxytetradecanoyl-[acyl-carrier-protein] and UDP-N-acetyl-alpha-D-glucosamine: step 6/6. In terms of biological role, transfers the gamma-phosphate of ATP to the 4'-position of a tetraacyldisaccharide 1-phosphate intermediate (termed DS-1-P) to form tetraacyldisaccharide 1,4'-bis-phosphate (lipid IVA). The protein is Tetraacyldisaccharide 4'-kinase of Rhodopseudomonas palustris (strain TIE-1).